A 620-amino-acid polypeptide reads, in one-letter code: tRNA uridine 5-carboxymethylaminomethyl modification enzyme MnmG (620 aa).

FAD contacts are provided by residues 13-18 (GGGHAG), V125, and S182. 280 to 294 (GPRYCPSVEDKIVKF) serves as a coordination point for NAD(+). N377 lines the FAD pocket.

The protein belongs to the MnmG family. In terms of assembly, homodimer. Heterotetramer of two MnmE and two MnmG subunits. FAD serves as cofactor.

It localises to the cytoplasm. In terms of biological role, NAD-binding protein involved in the addition of a carboxymethylaminomethyl (cmnm) group at the wobble position (U34) of certain tRNAs, forming tRNA-cmnm(5)s(2)U34. In Sulfurihydrogenibium sp. (strain YO3AOP1), this protein is tRNA uridine 5-carboxymethylaminomethyl modification enzyme MnmG.